The primary structure comprises 283 residues: Pre-protein-C8 (283 aa).

Residues 1–40 (MKEDNNTSEESGRINRRNVLKTVGAAGLFAAGSTGMAAAA) constitute a signal peptide (tat-type signal). The segment at 61–75 (ARELAKTPAFRELAQ) is helix-loop-helix (HLH) region.

As to quaternary structure, immunity protein HalI interacts with Halocin-C8; the interaction is direct. In terms of processing, predicted to be exported by the Tat system. The position of the signal peptide cleavage has not been experimentally proven.

Its subcellular location is the secreted. It is found in the cell membrane. Functionally, has antibacterial activity against a wide variety of haloarchaeons. Causes cell lysis and death, possibly by disrupting the cell wall. In terms of biological role, acts as an immunity protein for halocin-C8. Able to block the halocin-C8 activity by sequestering the activity of halocin-C8 through specific and direct binding. This Halobacterium sp. (strain AS7092) protein is Pre-protein-C8 (proC8).